We begin with the raw amino-acid sequence, 164 residues long: UPF0304 protein YPDSF_1971 (164 aa).

This sequence belongs to the UPF0304 family.

In Yersinia pestis (strain Pestoides F), this protein is UPF0304 protein YPDSF_1971.